The sequence spans 316 residues: Protein lifeguard 2 (316 aa).

Positions 1–53 (MTQGKLSVANKAPGTEGQQQVHGEKKEAPAVPSAPPSYEEATSGEGMKAGAFP) are disordered. Transmembrane regions (helical) follow at residues 106 to 126 (VYTI…LFTF), 138 to 158 (PGWY…LACC), and 165 to 185 (FPWN…LTGM). Asn-191 is a glycosylation site (N-linked (GlcNAc...) asparagine). A run of 4 helical transmembrane segments spans residues 194–214 (SVLL…VFSF), 225–245 (GVLF…AILL), 250–270 (VPWL…LFLA), and 290–310 (IFGA…FLQL).

Belongs to the BI1 family. LFG subfamily. Interacts with FAS/TNFRSF6 and BAX. Highly expressed in breast carcinoma tissues. Enhanced expression correlates with the grade of the tumor (grade II/grade III) in primary breast tumors (at protein level). Widely expressed. Expressed at high levels in the brain especially in the hippocampus.

It localises to the cell membrane. Its subcellular location is the membrane raft. It is found in the postsynaptic cell membrane. Functionally, antiapoptotic protein which protects cells uniquely from Fas-induced apoptosis. Regulates Fas-mediated apoptosis in neurons by interfering with caspase-8 activation. May play a role in cerebellar development by affecting cerebellar size, internal granular layer (IGL) thickness, and Purkinje cell (PC) development. The chain is Protein lifeguard 2 (FAIM2) from Homo sapiens (Human).